Here is a 183-residue protein sequence, read N- to C-terminus: Protein Syd (183 aa).

Belongs to the Syd family.

Its subcellular location is the cell inner membrane. Its function is as follows. Interacts with the SecY protein in vivo. May bind preferentially to an uncomplexed state of SecY, thus functioning either as a chelating agent for excess SecY in the cell or as a regulatory factor that negatively controls the translocase function. The polypeptide is Protein Syd (Yersinia pseudotuberculosis serotype O:1b (strain IP 31758)).